The sequence spans 233 residues: Biosynthetic peptidoglycan transglycosylase (233 aa).

The helical transmembrane segment at 8–28 threads the bilayer; the sequence is LIALPVGIFIFFNAYVYGNII.

This sequence belongs to the glycosyltransferase 51 family.

It is found in the cell inner membrane. It catalyses the reaction [GlcNAc-(1-&gt;4)-Mur2Ac(oyl-L-Ala-gamma-D-Glu-L-Lys-D-Ala-D-Ala)](n)-di-trans,octa-cis-undecaprenyl diphosphate + beta-D-GlcNAc-(1-&gt;4)-Mur2Ac(oyl-L-Ala-gamma-D-Glu-L-Lys-D-Ala-D-Ala)-di-trans,octa-cis-undecaprenyl diphosphate = [GlcNAc-(1-&gt;4)-Mur2Ac(oyl-L-Ala-gamma-D-Glu-L-Lys-D-Ala-D-Ala)](n+1)-di-trans,octa-cis-undecaprenyl diphosphate + di-trans,octa-cis-undecaprenyl diphosphate + H(+). It functions in the pathway cell wall biogenesis; peptidoglycan biosynthesis. In terms of biological role, peptidoglycan polymerase that catalyzes glycan chain elongation from lipid-linked precursors. The sequence is that of Biosynthetic peptidoglycan transglycosylase from Neisseria gonorrhoeae (strain ATCC 700825 / FA 1090).